Here is a 311-residue protein sequence, read N- to C-terminus: Cytosolic Fe-S cluster assembly factor Nubp1 homolog (311 aa).

Cysteine 9, cysteine 23, cysteine 26, and cysteine 32 together coordinate [4Fe-4S] cluster. 63–70 (GKGGVGKS) lines the ATP pocket. Residues cysteine 240 and cysteine 243 each coordinate [4Fe-4S] cluster.

The protein belongs to the Mrp/NBP35 ATP-binding proteins family. NUBP1/NBP35 subfamily. In terms of assembly, heterotetramer of 2 Nubp1 and 2 Nubp2 chains. The cofactor is [4Fe-4S] cluster.

It localises to the cytoplasm. Functionally, component of the cytosolic iron-sulfur (Fe/S) protein assembly (CIA) machinery. Required for maturation of extramitochondrial Fe-S proteins. The Nubp1-Nubp2 heterotetramer forms a Fe-S scaffold complex, mediating the de novo assembly of an Fe-S cluster and its transfer to target apoproteins. The sequence is that of Cytosolic Fe-S cluster assembly factor Nubp1 homolog from Drosophila erecta (Fruit fly).